We begin with the raw amino-acid sequence, 216 residues long: Octanoyltransferase (216 aa).

One can recognise a BPL/LPL catalytic domain in the interval 35–213; sequence NSNPDFIWIG…IIQEEFNFDF (179 aa). Substrate is bound by residues 77 to 84, 144 to 146, and 157 to 159; these read RGGEVTCH, SIG, and GFS. Catalysis depends on C175, which acts as the Acyl-thioester intermediate.

It belongs to the LipB family.

It localises to the cytoplasm. It catalyses the reaction octanoyl-[ACP] + L-lysyl-[protein] = N(6)-octanoyl-L-lysyl-[protein] + holo-[ACP] + H(+). Its pathway is protein modification; protein lipoylation via endogenous pathway; protein N(6)-(lipoyl)lysine from octanoyl-[acyl-carrier-protein]: step 1/2. Catalyzes the transfer of endogenously produced octanoic acid from octanoyl-acyl-carrier-protein onto the lipoyl domains of lipoate-dependent enzymes. Lipoyl-ACP can also act as a substrate although octanoyl-ACP is likely to be the physiological substrate. The protein is Octanoyltransferase of Prochlorococcus marinus (strain MIT 9312).